A 338-amino-acid chain; its full sequence is Lipoate-protein ligase A (338 aa).

Residues 29–216 (PATQRVLFLW…AFFAHYGERV (188 aa)) enclose the BPL/LPL catalytic domain. Residues Arg71, 76-79 (GAVF), and Lys134 contribute to the ATP site. Lys134 is a binding site for (R)-lipoate.

This sequence belongs to the LplA family. Monomer.

It localises to the cytoplasm. It catalyses the reaction L-lysyl-[lipoyl-carrier protein] + (R)-lipoate + ATP = N(6)-[(R)-lipoyl]-L-lysyl-[lipoyl-carrier protein] + AMP + diphosphate + H(+). Its pathway is protein modification; protein lipoylation via exogenous pathway; protein N(6)-(lipoyl)lysine from lipoate: step 1/2. It functions in the pathway protein modification; protein lipoylation via exogenous pathway; protein N(6)-(lipoyl)lysine from lipoate: step 2/2. In terms of biological role, catalyzes both the ATP-dependent activation of exogenously supplied lipoate to lipoyl-AMP and the transfer of the activated lipoyl onto the lipoyl domains of lipoate-dependent enzymes. The protein is Lipoate-protein ligase A of Salmonella schwarzengrund (strain CVM19633).